A 251-amino-acid polypeptide reads, in one-letter code: Appressoria-specific virulence factor GAS1 (251 aa).

The first 21 residues, methionine 1–glycine 21, serve as a signal peptide directing secretion. The interval valine 40–glutamine 76 is disordered. Residues glutamine 54–aspartate 66 show a composition bias toward polar residues.

It localises to the cytoplasm. Appressoria-specific virulence factor required for appressorial penetration in host and lesion development. In Pyricularia oryzae (strain 70-15 / ATCC MYA-4617 / FGSC 8958) (Rice blast fungus), this protein is Appressoria-specific virulence factor GAS1.